Consider the following 155-residue polypeptide: Ribosomal RNA large subunit methyltransferase H (155 aa).

Residues leucine 73, glycine 104, and 123–128 each bind S-adenosyl-L-methionine; that span reads LSPLTL.

Belongs to the RNA methyltransferase RlmH family. As to quaternary structure, homodimer.

The protein resides in the cytoplasm. It carries out the reaction pseudouridine(1915) in 23S rRNA + S-adenosyl-L-methionine = N(3)-methylpseudouridine(1915) in 23S rRNA + S-adenosyl-L-homocysteine + H(+). Its function is as follows. Specifically methylates the pseudouridine at position 1915 (m3Psi1915) in 23S rRNA. In Pseudomonas syringae pv. tomato (strain ATCC BAA-871 / DC3000), this protein is Ribosomal RNA large subunit methyltransferase H.